The chain runs to 375 residues: uncharacterized protein (375 aa).

A GP-PDE domain is found at 52–301 (VLLSAHRGSW…KQGFATYHES (250 aa)).

This is an uncharacterized protein from Sinorhizobium fredii (strain NBRC 101917 / NGR234).